The primary structure comprises 165 residues: Lipoprotein signal peptidase (165 aa).

2 consecutive transmembrane segments (helical) span residues 68–88 (PLLP…GLFG) and 100–120 (GFLL…GEVI). Residues Asp-121 and Asp-137 contribute to the active site. The helical transmembrane segment at 130–150 (FPVFNIADISINVGLACLIFA) threads the bilayer.

The protein belongs to the peptidase A8 family.

It localises to the cell inner membrane. It catalyses the reaction Release of signal peptides from bacterial membrane prolipoproteins. Hydrolyzes -Xaa-Yaa-Zaa-|-(S,diacylglyceryl)Cys-, in which Xaa is hydrophobic (preferably Leu), and Yaa (Ala or Ser) and Zaa (Gly or Ala) have small, neutral side chains.. It participates in protein modification; lipoprotein biosynthesis (signal peptide cleavage). This protein specifically catalyzes the removal of signal peptides from prolipoproteins. This is Lipoprotein signal peptidase from Acaryochloris marina (strain MBIC 11017).